An 81-amino-acid polypeptide reads, in one-letter code: X antigen family member 1 (81 aa).

Lys-12 participates in a covalent cross-link: Glycyl lysine isopeptide (Lys-Gly) (interchain with G-Cter in SUMO2). A Phosphoserine modification is found at Ser-20. Glycyl lysine isopeptide (Lys-Gly) (interchain with G-Cter in SUMO2) cross-links involve residues Lys-61 and Lys-65.

It belongs to the GAGE family. As to expression, in normal tissues, highly expressed in testis. Expressed also in many different types of cancers: highly expressed in breast cancer, prostate cancer and many types of lung cancers, including squamous cell carcinoma, small cell carcinoma, non-small cell carcinoma, and adenocarcinoma, as well as in Ewing's cell lines, in some Ewing's sarcoma patient samples, and in one of one alveolar rhabdomyosarcoma patient sample.

This Homo sapiens (Human) protein is X antigen family member 1.